The sequence spans 461 residues: tRNA modification GTPase MnmE (461 aa).

Residues Arg27, Glu89, and Arg128 each coordinate (6S)-5-formyl-5,6,7,8-tetrahydrofolate. Residues 224–382 (GLATAIVGQP…LEELINKLFF (159 aa)) form the TrmE-type G domain. Asn234 contributes to the K(+) binding site. GTP-binding positions include 234-239 (NVGKSS), 253-259 (TDVAGTT), and 278-281 (DTAG). Residue Ser238 coordinates Mg(2+). K(+) is bound by residues Thr253, Val255, and Thr258. Thr259 contributes to the Mg(2+) binding site. Residue Lys461 participates in (6S)-5-formyl-5,6,7,8-tetrahydrofolate binding.

The protein belongs to the TRAFAC class TrmE-Era-EngA-EngB-Septin-like GTPase superfamily. TrmE GTPase family. Homodimer. Heterotetramer of two MnmE and two MnmG subunits. The cofactor is K(+).

The protein localises to the cytoplasm. Functionally, exhibits a very high intrinsic GTPase hydrolysis rate. Involved in the addition of a carboxymethylaminomethyl (cmnm) group at the wobble position (U34) of certain tRNAs, forming tRNA-cmnm(5)s(2)U34. This chain is tRNA modification GTPase MnmE, found in Lactobacillus acidophilus (strain ATCC 700396 / NCK56 / N2 / NCFM).